The primary structure comprises 233 residues: Small ribosomal subunit protein uS3 (233 aa).

One can recognise a KH type-2 domain in the interval 39–107 (VREFLKKRLG…PVHVNIEEVR (69 aa)). Residues 212–233 (VQATPAAPEKKMRKGARNAAAN) form a disordered region.

Belongs to the universal ribosomal protein uS3 family. Part of the 30S ribosomal subunit. Forms a tight complex with proteins S10 and S14.

In terms of biological role, binds the lower part of the 30S subunit head. Binds mRNA in the 70S ribosome, positioning it for translation. In Chromobacterium violaceum (strain ATCC 12472 / DSM 30191 / JCM 1249 / CCUG 213 / NBRC 12614 / NCIMB 9131 / NCTC 9757 / MK), this protein is Small ribosomal subunit protein uS3.